We begin with the raw amino-acid sequence, 134 residues long: Ribosome-binding factor A (134 aa).

The protein belongs to the RbfA family. Monomer. Binds 30S ribosomal subunits, but not 50S ribosomal subunits or 70S ribosomes.

The protein localises to the cytoplasm. Its function is as follows. One of several proteins that assist in the late maturation steps of the functional core of the 30S ribosomal subunit. Associates with free 30S ribosomal subunits (but not with 30S subunits that are part of 70S ribosomes or polysomes). Required for efficient processing of 16S rRNA. May interact with the 5'-terminal helix region of 16S rRNA. The sequence is that of Ribosome-binding factor A from Rhizobium etli (strain CIAT 652).